The chain runs to 650 residues: Acetyl-coenzyme A synthetase (650 aa).

CoA contacts are provided by residues 191–194, threonine 311, and asparagine 335; that span reads RGGR. ATP contacts are provided by residues 387 to 389, 411 to 416, aspartate 500, and arginine 515; these read GEP and DTWWQT. Position 523 (serine 523) interacts with CoA. Arginine 526 provides a ligand contact to ATP. 3 residues coordinate Mg(2+): valine 537, histidine 539, and valine 542. Position 584 (arginine 584) interacts with CoA. Lysine 609 is modified (N6-acetyllysine).

This sequence belongs to the ATP-dependent AMP-binding enzyme family. The cofactor is Mg(2+). Post-translationally, acetylated. Deacetylation by the SIR2-homolog deacetylase activates the enzyme.

It carries out the reaction acetate + ATP + CoA = acetyl-CoA + AMP + diphosphate. Functionally, catalyzes the conversion of acetate into acetyl-CoA (AcCoA), an essential intermediate at the junction of anabolic and catabolic pathways. AcsA undergoes a two-step reaction. In the first half reaction, AcsA combines acetate with ATP to form acetyl-adenylate (AcAMP) intermediate. In the second half reaction, it can then transfer the acetyl group from AcAMP to the sulfhydryl group of CoA, forming the product AcCoA. The sequence is that of Acetyl-coenzyme A synthetase from Shewanella sp. (strain MR-7).